The chain runs to 227 residues: Phosphoribosylformylglycinamidine synthase subunit PurQ (227 aa).

Residues 3–225 (FAVIVFPGSN…LKQWRETYVV (223 aa)) enclose the Glutamine amidotransferase type-1 domain. Cys-86 serves as the catalytic Nucleophile. Active-site residues include His-194 and Glu-196.

As to quaternary structure, part of the FGAM synthase complex composed of 1 PurL, 1 PurQ and 2 PurS subunits.

Its subcellular location is the cytoplasm. The catalysed reaction is N(2)-formyl-N(1)-(5-phospho-beta-D-ribosyl)glycinamide + L-glutamine + ATP + H2O = 2-formamido-N(1)-(5-O-phospho-beta-D-ribosyl)acetamidine + L-glutamate + ADP + phosphate + H(+). It catalyses the reaction L-glutamine + H2O = L-glutamate + NH4(+). Its pathway is purine metabolism; IMP biosynthesis via de novo pathway; 5-amino-1-(5-phospho-D-ribosyl)imidazole from N(2)-formyl-N(1)-(5-phospho-D-ribosyl)glycinamide: step 1/2. Part of the phosphoribosylformylglycinamidine synthase complex involved in the purines biosynthetic pathway. Catalyzes the ATP-dependent conversion of formylglycinamide ribonucleotide (FGAR) and glutamine to yield formylglycinamidine ribonucleotide (FGAM) and glutamate. The FGAM synthase complex is composed of three subunits. PurQ produces an ammonia molecule by converting glutamine to glutamate. PurL transfers the ammonia molecule to FGAR to form FGAM in an ATP-dependent manner. PurS interacts with PurQ and PurL and is thought to assist in the transfer of the ammonia molecule from PurQ to PurL. The sequence is that of Phosphoribosylformylglycinamidine synthase subunit PurQ from Bacillus cereus (strain Q1).